A 539-amino-acid chain; its full sequence is E3 ubiquitin-protein ligase arc-1 (539 aa).

An RING-type zinc finger spans residues 6–53 (CNVCNEEYSARDPLKCPRVLTGCGHTICHNCAISIAGRNSSIFCPFDR). The B box-type zinc-finger motif lies at 103 to 149 (LLNLECDEDSEHVAVIYCTVCDSNLCERCSESTHSTNVLSKHRRIPL). The tract at residues 369–539 (ESRVVLLGLD…LSRLNGTCPV (171 aa)) is ARF-like. GTP contacts are provided by residues 376 to 383 (GLDGAGKT), 422 to 426 (DVGGL), and 481 to 484 (NRKD).

This sequence in the C-terminal section; belongs to the small GTPase superfamily. Arf family.

It carries out the reaction S-ubiquitinyl-[E2 ubiquitin-conjugating enzyme]-L-cysteine + [acceptor protein]-L-lysine = [E2 ubiquitin-conjugating enzyme]-L-cysteine + N(6)-ubiquitinyl-[acceptor protein]-L-lysine.. Its pathway is protein modification; protein ubiquitination. In terms of biological role, acts as an E3 ubiquitin-protein ligase. The polypeptide is E3 ubiquitin-protein ligase arc-1 (arc-1) (Caenorhabditis elegans).